A 274-amino-acid chain; its full sequence is CDC48-associated ubiquitin-like/zinc finger protein 1 (274 aa).

Residues 12–58 form an AN1-type zinc finger; it reads LDVGKHCAYCRQLDFLPFHCSFCNEDFCSNHRLKEDHHCRWLLEHEE. Zn(2+) is bound by residues cysteine 18, cysteine 21, cysteine 31, cysteine 34, cysteine 39, histidine 42, histidine 48, and cysteine 50. The tract at residues 170 to 266 is ubiquitin-like; that stretch reads NRIYIWCYLV…KDLDTLYLVH (97 aa). Serine 273 bears the Phosphoserine mark.

As to quaternary structure, interacts (via its ubiquitin-like domain) with CDC48 (via N-terminus). Associates with the 26S proteasome. Specifically interacts with the regulatory particle (RP) subunit RPN2. Exposure to arsenite, a known inducer of protein misfolding resulting in accumulation of polyubiquitinated conjugates, enhances the association with the proteoasome. Binds to ubiquitinated proteins conjugated to a 4 or more molecule ubiquitin chain. Binding to ubiquitinated proteins is zinc-dependent.

It is found in the cytoplasm. It localises to the nucleus. Its function is as follows. Promotes efficient arsenite-induced clearance of stress granules (SGs). May have a role in the ubiquitin-proteasome system (UPS) protecting cells from metalloid-induced proteotoxicity. This Saccharomyces cerevisiae (strain ATCC 204508 / S288c) (Baker's yeast) protein is CDC48-associated ubiquitin-like/zinc finger protein 1.